Reading from the N-terminus, the 513-residue chain is GMP synthase [glutamine-hydrolyzing] (513 aa).

The Glutamine amidotransferase type-1 domain occupies 3 to 192; it reads TVVVLDYGSQ…VSKIAKMEKN (190 aa). The Nucleophile role is filled by C80. Residues H166 and E168 contribute to the active site. The 196-residue stretch at 193–388 folds into the GMPS ATP-PPase domain; sequence WEMKDFVSEK…LELPQSMINR (196 aa). Residue 220–226 coordinates ATP; it reads SGGVDSS.

Homodimer.

It catalyses the reaction XMP + L-glutamine + ATP + H2O = GMP + L-glutamate + AMP + diphosphate + 2 H(+). It participates in purine metabolism; GMP biosynthesis; GMP from XMP (L-Gln route): step 1/1. In terms of biological role, catalyzes the synthesis of GMP from XMP. The chain is GMP synthase [glutamine-hydrolyzing] from Thermosipho melanesiensis (strain DSM 12029 / CIP 104789 / BI429).